Reading from the N-terminus, the 166-residue chain is Protein-export protein SecB (166 aa).

Belongs to the SecB family. In terms of assembly, homotetramer, a dimer of dimers. One homotetramer interacts with 1 SecA dimer.

The protein localises to the cytoplasm. One of the proteins required for the normal export of preproteins out of the cell cytoplasm. It is a molecular chaperone that binds to a subset of precursor proteins, maintaining them in a translocation-competent state. It also specifically binds to its receptor SecA. The sequence is that of Protein-export protein SecB from Actinobacillus succinogenes (strain ATCC 55618 / DSM 22257 / CCUG 43843 / 130Z).